Reading from the N-terminus, the 237-residue chain is AA9 family lytic polysaccharide monooxygenase C (237 aa).

The N-terminal stretch at 1 to 15 is a signal peptide; it reads MKVLAPLILAGAASA. Positions 16 and 99 each coordinate Cu(2+). 2 disulfide bridges follow: cysteine 54–cysteine 185 and cysteine 155–cysteine 237. Asparagine 112 carries an N-linked (GlcNAc...) asparagine glycan. 2 residues coordinate O2: histidine 171 and glutamine 180. Tyrosine 182 contributes to the Cu(2+) binding site.

The protein belongs to the polysaccharide monooxygenase AA9 family. It depends on Cu(2+) as a cofactor.

Its subcellular location is the secreted. It carries out the reaction [(1-&gt;4)-beta-D-glucosyl]n+m + reduced acceptor + O2 = 4-dehydro-beta-D-glucosyl-[(1-&gt;4)-beta-D-glucosyl]n-1 + [(1-&gt;4)-beta-D-glucosyl]m + acceptor + H2O.. Is able to utilize various natural phenolic compounds as reducing agents. Most of these reducing agents are present in plants, either free or as lignin building blocks, such as sinapic acid, or as flavonoids such as catechin and dopamine. Phenolic compounds with 1,2-benzenediol and 1,2,3-benzenetriol moieties yield the highest release of oxidized and non-oxidized glucooligosaccharides from cellulose compared to monophenols or sulfur-containing compounds. Its function is as follows. Lytic polysaccharide monooxygenase (LPMO) that depolymerizes crystalline and amorphous polysaccharides via the oxidation of scissile alpha- or beta-(1-4)-glycosidic bonds, yielding C4 oxidation products. Catalysis by LPMOs requires the reduction of the active-site copper from Cu(II) to Cu(I) by a reducing agent and H(2)O(2) or O(2) as a cosubstrate. Shows oxidative cleavage of beta-(1-3, 1-4)-glucan from oat spelt or xyloglucan from tamarind seed, in addition to cellulose. This is AA9 family lytic polysaccharide monooxygenase C from Thermothelomyces thermophilus (strain ATCC 42464 / BCRC 31852 / DSM 1799) (Sporotrichum thermophile).